The chain runs to 186 residues: Mating-type-like protein ALPHA2 (186 aa).

Positions 112-174 form a DNA-binding region, homeobox; TALE-type; the sequence is KKIKSRRLTK…NRRRKEKNTK (63 aa).

Belongs to the TALE/M-ATYP homeobox family. As to quaternary structure, forms a heterodimer with A1.

The protein localises to the nucleus. Mating type proteins are sequence specific DNA-binding proteins that act as master switches in yeast differentiation by controlling gene expression in a cell type-specific fashion. Transcriptional corepressor that acts in conjunction with A1 to repress transcription both of homozygote-specific genes and of genes necessary for the white-opaque switch, a prerequisite for mating. This is Mating-type-like protein ALPHA2 (MTLALPHA2) from Candida albicans (strain SC5314 / ATCC MYA-2876) (Yeast).